Reading from the N-terminus, the 762-residue chain is Phosphoribosylformylglycinamidine synthase subunit PurL (762 aa).

H58 is an active-site residue. ATP contacts are provided by Y61 and R105. Residue E107 participates in Mg(2+) binding. Substrate is bound by residues 108–111 (SHNH) and R130. The active-site Proton acceptor is H109. D131 lines the Mg(2+) pocket. Q255 serves as a coordination point for substrate. Residue D283 participates in Mg(2+) binding. 327-329 (ESQ) is a binding site for substrate. Residues N513 and G550 each coordinate ATP. N551 serves as a coordination point for Mg(2+). S553 is a binding site for substrate.

This sequence belongs to the FGAMS family. As to quaternary structure, monomer. Part of the FGAM synthase complex composed of 1 PurL, 1 PurQ and 2 PurS subunits.

The protein localises to the cytoplasm. It catalyses the reaction N(2)-formyl-N(1)-(5-phospho-beta-D-ribosyl)glycinamide + L-glutamine + ATP + H2O = 2-formamido-N(1)-(5-O-phospho-beta-D-ribosyl)acetamidine + L-glutamate + ADP + phosphate + H(+). It functions in the pathway purine metabolism; IMP biosynthesis via de novo pathway; 5-amino-1-(5-phospho-D-ribosyl)imidazole from N(2)-formyl-N(1)-(5-phospho-D-ribosyl)glycinamide: step 1/2. Part of the phosphoribosylformylglycinamidine synthase complex involved in the purines biosynthetic pathway. Catalyzes the ATP-dependent conversion of formylglycinamide ribonucleotide (FGAR) and glutamine to yield formylglycinamidine ribonucleotide (FGAM) and glutamate. The FGAM synthase complex is composed of three subunits. PurQ produces an ammonia molecule by converting glutamine to glutamate. PurL transfers the ammonia molecule to FGAR to form FGAM in an ATP-dependent manner. PurS interacts with PurQ and PurL and is thought to assist in the transfer of the ammonia molecule from PurQ to PurL. This is Phosphoribosylformylglycinamidine synthase subunit PurL from Corynebacterium glutamicum (strain R).